The chain runs to 572 residues: Transducin-like enhancer protein 6 (572 aa).

Disordered regions lie at residues 1-30 (MTSRDQPRPKGPPKSTSPCPGISNSESSPT), 92-121 (QSEEVSPAEPASPGTPQQVKDKTLQESSFE), and 174-236 (KAKP…VQEP). Over residues 14–30 (KSTSPCPGISNSESSPT) the composition is skewed to polar residues. 7 WD repeats span residues 284-322 (AHGELVLATAISSFTRHVFTCGRRGIKVWSLTGQVAEDR), 332-372 (TPGA…LHVK), 377-416 (CAGLNCQALDANLDANLAFASFTSGVVRIWDLRDQSVVRD), 419-456 (GYPDGVKSIVVKGYNIWTGGPDACLRCWDQRTIMKPLE), 458-497 (QFKSQIMSLSHSPQEDWVLLGMANGQQWLQSTSGSQRHMV), 499-538 (QKDSVILSVKFSPFGQWWASVGMDDFLGVYSMPAGTKVFE), and 540-571 (PEMSPVTCCDVSSNNRLVVTGSGEHASVYQIT). Phosphoserine; by PKA is present on Ser510.

The protein belongs to the WD repeat Groucho/TLE family. As to quaternary structure, homodimers. Component of the subcortical maternal complex (SCMC), at least composed of NLRP5, KHDC3, OOEP, and TLE6. Within the complex, interacts with NLRP5, KHDC3 and OOEP. The SCMC may facilitate translocation of its components between the nuclear and cytoplasmic compartments. As part of the SCMC interacts with the SCMC-associated protein ZBED3. As part of the SCMC interacts with the SCMC-associated protein NLRP4F. As part of the SCMC interacts with the SCMC-associated protein CFL1/Cofilin-1. Interacts with FOXG1/BF-1; the interaction inhibits TLE1 interaction with FOXG1/BF-1. Interacts with NFATC1. Interacts with PAX6. Component of the subcortical maternal complex (SCMC), at least composed of NLRP5, KHDC3L, OOEP, and TLE6 isoform 1. Within the complex, interacts with NLRP5, KHDC3L and OOEP. The SCMC may facilitate translocation of its components between the nuclear and cytoplasmic compartments.

The protein localises to the cytoplasm. Its subcellular location is the nucleus. Functionally, component of the subcortical maternal complex (SCMC), a multiprotein complex that plays a key role in early embryonic development. The SCMC complex is a structural constituent of cytoplasmic lattices, which consist in fibrous structures found in the cytoplasm of oocytes and preimplantation embryos. They are required to store maternal proteins critical for embryonic development, such as proteins that control epigenetic reprogramming of the preimplantation embryo, and prevent their degradation or activation. Also required for spermatogenesis: regulates spermatogonia proliferation and cell cycle progression, potentially via regulation of cell cycle regulatory genes such as; CEBPB, CEBPA, CSF3, PCNA, and CDK4. Suppresses FOXG1/BF-1-mediated transcriptional repression by inhibiting interaction of the transcriptional corepressor TLE1 with FOXG1 which promotes cortical neuron differentiation. Acts as a transcriptional corepressor of NFATC1-mediated gene expression by contributing to PAX6-mediated repression. Its function is as follows. Component of the subcortical maternal complex (SCMC), a multiprotein complex that plays a key role in early embryonic development. This chain is Transducin-like enhancer protein 6, found in Homo sapiens (Human).